The following is a 936-amino-acid chain: MAAQRNRSKESKDCSGLVLLCLFFGIPWEAGARQISYSIPEELEKGSFVGNISKDLGLAPRELAERGVRIVSRGRTQLFSLNPRSGSLVTAGRIDREELCAQSARCVVSFNILVEDRVKLFGIEIEVTDINDNAPTFQAENLDVKINENVAAGMRFPLPEAIDPDVGVNSLQSYQLSPNKHFSLRVQSRANGVKYPELVLEHSLDREEEAIHHLVLTASDGGDPLRSGTVLVSVTVFDANDNAPVFTLPEYRVSVPENLPVGTQLLTVTATDRDEGANGEVTYSFRKLPDTQLLKFQLNKYTGEIKISENLDYEETGFYEVEIQAEDGGAYLATAKVLITVEDVNDNSPELTITSLFSPVTEDSPLGTVVALLNVHDLDSEQNGQVTCSILAYLPFKLEKSIDSYYRLVIHRALDREQVSSYNITVRATDGGSPPLSTEAHFTLQVADINDNPPTFSQVSYFTYIPENNARGASIFSVTALDPDSKENARIIYSLAEDTIQGVPLSSYISINSDTGVLYALRSFDYEQFHELQMQVTASDSGDPPLSSNVSLSLFVLDQNDNAPEILYPALPTDGSTGVELAPRSAEPGYLVTKVVAVDRDSGQNAWLSYRLLKASEPGLFAVGEHTGEVRTARALLDRDALKQSLVVAVQDHGQPPLSATVTLTVAVADSIPQVLADLGSFESPANSETSDLTLYLVVAVAAVSCVFLAFVIVLLALRLRRWHKSRLLQASGGGLTGVSGSHFVGVDGVRAFLQTYSHEVSLTADSRKSHLIFPQPNYADTLISQESCEKKDPLSLLDDSKFPIEDTPLVPQAPPNTDWRFSQAQRPGTSGSQNGDDTGTWPNNQFDTEMLQAMILASASEAADGSSTLGGGAGTMGLSARYGPQFTLQHVPDYRQNVYIPGSNATLTNAAGKRDGKAPAGGNGNKKKSGKKEKK.

A signal peptide spans Met-1–Ala-32. Cadherin domains lie at Arg-33–Phe-137, Gln-138–Phe-246, Thr-247–Leu-351, Thr-352–Phe-456, Ser-457–Ile-566, and Asp-574–Asn-687. Residues Arg-33 to Tyr-696 lie on the Extracellular side of the membrane. N-linked (GlcNAc...) asparagine glycosylation occurs at Asn-51. 2 N-linked (GlcNAc...) asparagine glycosylation sites follow: Asn-423 and Asn-549. The helical transmembrane segment at Leu-697–Ala-717 threads the bilayer. The Cytoplasmic segment spans residues Leu-718 to Lys-936. Disordered stretches follow at residues Ser-801 to Asn-845 and Ala-906 to Lys-936. The segment covering Trp-820–Asn-845 has biased composition (polar residues). Over residues Asn-926–Lys-936 the composition is skewed to basic residues.

The protein resides in the cell membrane. Potential calcium-dependent cell-adhesion protein. May be involved in the establishment and maintenance of specific neuronal connections in the brain. The sequence is that of Protocadherin gamma-A10 (PCDHGA10) from Pan troglodytes (Chimpanzee).